Consider the following 2497-residue polypeptide: Polyprotein P1234 (2497 aa).

Positions 28–259 (EAKQVTDNDH…EKRDLLRSWH (232 aa)) constitute an Alphavirus-like MT domain. The interval 244 to 263 (GSTIYHEKRDLLRSWHLPSV) is nsP1 membrane-binding. A lipid anchor (S-palmitoyl cysteine; by host) is attached at C419. The region spanning 690–841 (ELVDPPFHEF…HEICTQVFHK (152 aa)) is the (+)RNA virus helicase ATP-binding domain. 721 to 728 (GVPGSGKS) is a binding site for a ribonucleoside 5'-triphosphate. A (+)RNA virus helicase C-terminal domain is found at 842–990 (SISRRCTKSV…MEEWQAEHDA (149 aa)). One can recognise a Peptidase C9 domain in the interval 1003 to 1322 (DVFQNKANVC…STLTNIYTGS (320 aa)). Residues 1004–1023 (VFQNKANVCWAKALVPVLKT) are nucleolus localization signal. C1012 (for cysteine protease nsP2 activity) is an active-site residue. Positions 1056–1065 (VRFFGLDLDS) match the Nuclear export signal motif. The active-site For cysteine protease nsP2 activity is H1081. A Nuclear localization signal motif is present at residues 1179–1183 (SGKTV). In terms of domain architecture, Macro spans 1328–1489 (GCAPSYHVVR…TLKEVVARRE (162 aa)). D1339, N1353, G1361, G1441, I1442, and F1443 together coordinate ADP-D-ribose. 4 residues coordinate Zn(2+): C1596, C1598, C1621, and C1639. Disordered stretches follow at residues 1774–1806 (IPRPRVQSTSTDVDSISALESCDSTSDARSVDS) and 1827–1865 (APRTKFRTPPVPKPRARRPFHPLSSRSSSRSSLASNPPG). The binding to host FXR family members stretch occupies residues 1856–1877 (RSSLASNPPGVNRVITREEFEA). Residues 2254–2369 (DWVLETDIAS…KGVKSDKLMA (116 aa)) form the RdRp catalytic domain.

In terms of assembly, interacts with non-structural protein 3. Interacts with RNA-directed RNA polymerase nsP4. Interacts with protease nsP2. interacts with itself. Interacts with mRNA-capping enzyme nsP1. Interacts with host DDX1. Interacts with host DDX3. Interacts (via C-terminus) with host FXR1; this interaction inhibits the formation of host stress granules on viral mRNAs and the nsp3-FXR1 complexes bind viral RNAs and probably orchestrate the assembly of viral replication complexes. Interacts (via C-terminus) with host FXR2; this interaction inhibits the formation of host stress granules on viral mRNAs and the nsp3-FXR2 complexes bind viral RNAs and probably orchestrate the assembly of viral replication complexes. Interacts (via C-terminus) with host FMR1; this interaction inhibits the formation of host stress granules on viral mRNAs and the nsp3-FMR1 complexes bind viral RNAs and probably orchestrate the assembly of viral replication complexes. As to quaternary structure, interacts with mRNA-capping enzyme nsP1. Interacts with protease nsP2. interacts with itself. In terms of assembly, interacts with RNA-directed RNA polymerase nsP4. Interacts with mRNA-capping enzyme nsP1. Interacts with KPNA1/karyopherin-alpha1; this interaction probably allows the active transport of protease nsP2 into the host nucleus. The cofactor is Mg(2+). Mn(2+) serves as cofactor. In terms of processing, specific enzymatic cleavages in vivo yield mature proteins. The processing of the polyprotein is temporally regulated. In early stages (1.7 hpi), P1234 is first cleaved in trans through its nsP2 protease activity, releasing P123' and nsP4, which associate to form the early replication complex. At the same time, P1234 is also cut at the nsP1/nsP2 site early in infection but with lower efficiency. After replication of the viral minus-strand RNAs (4 hpi), the polyproteins are cut at the nsP1/nsP2 and nsP2/nsP3 sites very efficiently, preventing accumulation of P123' and P1234 and allowing the formation of the late replication complex. NsP3'/nsP4 site is not cleaved anymore and P34 is produced rather than nsP4. Post-translationally, specific enzymatic cleavages in vivo yield mature proteins. The processing of the polyprotein is temporally regulated. In early stages (1.7 hpi), P123 is cleaved at the nsP1/nsP2 site with low efficiency. After replication of the viral minus-strand RNAs (4 hpi), the polyproteins are cut at the nsP1/nsP2 and nsP2/nsP3 sites very efficiently, preventing accumulation of P123 and allowing the formation of the late replication complex. Specific enzymatic cleavages in vivo yield mature proteins. The processing of the polyprotein is temporally regulated. In early stages (1.7 hpi), P123' is cleaved at the nsP1/nsP2 site with low efficiency. After replication of the viral minus-strand RNAs (4 hpi), the polyproteins are cut at the nsP1/nsP2 and nsP2/nsP3 sites very efficiently, preventing accumulation of P123' and allowing the formation of the late replication complex. In terms of processing, palmitoylated by host palmitoyltransferases ZDHHC2 and ZDHHC19. Post-translationally, phosphorylated by host on serines and threonines. Ubiquitinated; targets the protein for rapid degradation via the ubiquitin system. Nsp4 is present in extremely low quantities due to low frequency of translation through the amber stop-codon and the degradation by the ubiquitin pathway.

The protein localises to the host cytoplasmic vesicle membrane. It is found in the host cell membrane. The protein resides in the host cell projection. It localises to the host filopodium. Its subcellular location is the host nucleus. The protein localises to the host cytoplasm. It catalyses the reaction GTP + S-adenosyl-L-methionine = N(7)-methyl-GTP + S-adenosyl-L-homocysteine. The catalysed reaction is N(7)-methyl-GTP + L-histidyl-[protein] = N(tele)-(N(7)-methylguanosine 5'-phospho)-L-histidyl-[protein] + diphosphate. It carries out the reaction N(tele)-(N(7)-methylguanosine 5'-phospho)-L-histidyl-[protein] + a 5'-end diphospho-(purine-ribonucleoside) in mRNA + H(+) = a 5'-end (N(7)-methyl 5'-triphosphoguanosine)-(purine-ribonucleoside) in mRNA + L-histidyl-[protein]. The enzyme catalyses a 5'-end triphospho-ribonucleoside in mRNA + H2O = a 5'-end diphospho-ribonucleoside in mRNA + phosphate + H(+). It catalyses the reaction a ribonucleoside 5'-triphosphate + H2O = a ribonucleoside 5'-diphosphate + phosphate + H(+). The catalysed reaction is ATP + H2O = ADP + phosphate + H(+). It carries out the reaction RNA(n) + a ribonucleoside 5'-triphosphate = RNA(n+1) + diphosphate. The enzyme catalyses 4-O-(ADP-D-ribosyl)-L-aspartyl-[protein] + H2O = L-aspartyl-[protein] + ADP-D-ribose + H(+). It catalyses the reaction 5-O-(ADP-D-ribosyl)-L-glutamyl-[protein] + H2O = L-glutamyl-[protein] + ADP-D-ribose + H(+). The catalysed reaction is RNA(n) + ATP = RNA(n)-3'-adenine ribonucleotide + diphosphate. It carries out the reaction ADP-alpha-D-ribose 1''-phosphate + H2O = ADP-D-ribose + phosphate. Its activity is regulated as follows. Inhibited by sinefungin. Functionally, inactive precursor of the viral replicase, which is activated by cleavages carried out by the viral protease nsP2. Its function is as follows. The early replication complex formed by the polyprotein P123 and nsP4 synthesizes the minus-strand RNAs (antigenome). Polyprotein P123 is a short-lived polyprotein that accumulates during early stage of infection. As soon P123 is cleaved into mature proteins, the plus-strand RNAs synthesis begins. The early replication complex formed by the polyprotein P123' and nsP4 synthesizes minus-strand RNAs (antigenome). Polyprotein P123' is a short-lived polyprotein that accumulates during early stage of infection. As soon P123' is cleaved into mature proteins, the plus-strand RNAs synthesis begins. In terms of biological role, cytoplasmic capping enzyme that catalyzes two virus-specific reactions: methyltransferase and nsP1 guanylyltransferase. mRNA-capping is necessary since all viral RNAs are synthesized in the cytoplasm, and host capping enzymes are restricted to the nucleus. The enzymatic reaction involves a covalent link between 7-methyl-GMP and nsP1, whereas eukaryotic capping enzymes form a covalent complex only with GMP. NsP1 capping consists in the following reactions: GTP is first methylated into 7-methyl-GMP and then is covalently linked to nsP1 to form the m7GMp-nsP1 complex from which 7-methyl-GMP complex is transferred to the mRNA to create the cap structure. NsP1 is also needed for the initiation of the minus-strand RNAs synthesis. Probably serves as a membrane anchor for the replication complex composed of nsP1-nsP4. Nsp1 is needed for the initiation of the minus-strand RNAs synthesis. Palmitoylated nsP1 is remodeling host cell cytoskeleton, and induces filopodium-like structure formation at the surface of the host cell. Functionally, multifunctional protein whose N-terminus is part of the RNA polymerase complex and displays NTPase, RNA triphosphatase and helicase activities. NTPase and RNA triphosphatase are involved in viral RNA capping and helicase keeps a check on the dsRNA replication intermediates. The C-terminus harbors a protease that specifically cleaves the polyproteins and releases the mature proteins. Required for the shutoff of minus-strand RNAs synthesis. Inhibits host translation to ensure maximal viral gene expression and evade host immune response. Its function is as follows. Seems to be essential for minus-strand RNAs and subgenomic 26S mRNAs synthesis. Displays mono-ADP-ribosylhydrolase activity. ADP-ribosylation is a post-translational modification that controls various processes of the host cell and the virus probably needs to revert it for optimal viral replication. Binds proteins of FXR family and sequesters them into the viral RNA replication complexes thereby inhibiting the formation of host stress granules on viral mRNAs. The nsp3-FXR complexes bind viral RNAs and probably orchestrate the assembly of viral replication complexes, thanks to the ability of FXR family members to self-assemble and bind DNA. Seems to be essential for minus-strand RNAs and subgenomic 26S mRNAs synthesis. Displays mono-ADP-ribosylhydrolase activity. ADP-ribosylation is a post-translational modification that controls various processes of the host cell and the virus probably needs to revert it for optimal viral replication. Binds proteins of FXR family and sequesters them into the viral RNA replication complexes thereby inhibiting the formation of host stress granules on viral mRNAs. The nsp3'-FXR complexes bind viral RNAs and probably orchestrate the assembly of viral replication complexes, thanks to the ability of FXR family members to self-assemble and bind DNA. In terms of biological role, RNA dependent RNA polymerase. Replicates genomic and antigenomic RNA by recognizing replications specific signals. The early replication complex formed by the polyprotein P123 and nsP4 synthesizes minus-strand RNAs. The late replication complex composed of fully processed nsP1-nsP4 is responsible for the production of genomic and subgenomic plus-strand RNAs. The protein is Polyprotein P1234 of Venezuelan equine encephalitis virus (VEEV).